We begin with the raw amino-acid sequence, 156 residues long: Small ribosomal subunit protein uS7 (156 aa).

This sequence belongs to the universal ribosomal protein uS7 family. In terms of assembly, part of the 30S ribosomal subunit. Contacts proteins S9 and S11.

One of the primary rRNA binding proteins, it binds directly to 16S rRNA where it nucleates assembly of the head domain of the 30S subunit. Is located at the subunit interface close to the decoding center, probably blocks exit of the E-site tRNA. This Synechococcus sp. (strain RCC307) protein is Small ribosomal subunit protein uS7.